A 706-amino-acid chain; its full sequence is MEMFTFLLTCIFLPLLRGHSLFTCEPITVPRCMKMAYNMTFFPNLMGHYDQSIAAVEMEHFLPLANLECSPNIETFLCKAFVPTCIEQIHVVPPCRKLCEKVYSDCKKLIDTFGIRWPEELECDRLQYCDETVPVTFDPHTEFLGPQKKTEQVQRDIGFWCPRHLKTSGGQGYKFLGIDQCAPPCPNMYFKSDELEFAKSFIGTVSIFCLCATLFTFLTFLIDVRRFRYPERPIIYYSVCYSIVSLMYFIGFLLGDSTACNKADEKLELGDTVVLGSQNKACTVLFMLLYFFTMAGTVWWVILTITWFLAAGRKWSCEAIEQKAVWFHAVAWGTPGFLTVMLLAMNKVEGDNISGVCFVGLYDLDASRYFVLLPLCLCVFVGLSLLLAGIISLNHVRQVIQHDGRNQEKLKKFMIRIGVFSGLYLVPLVTLLGCYVYEQVNRITWEITWVSDHCRQYHIPCPYQAKAKARPELALFMIKYLMTLIVGISAVFWVGSKKTCTEWAGFFKRNRKRDPISESRRVLQESCEFFLKHNSKVKHKKKHYKPSSHKLKVISKSMGTSTGATANHGTSAVAITSHDYLGQETLTEIQTSPETSMREVKADGASTPRLREQDCGEPASPAASISRLSGEQVDGKGQAGSVSESARSEGRISPKSDITDTGLAQSNNLQVPSSSEPSSLKGSTSLLVHPVSGVRKEQGGGCHSDT.

The first 18 residues, 1–18 (MEMFTFLLTCIFLPLLRG), serve as a signal peptide directing secretion. One can recognise an FZ domain in the interval 19 to 132 (HSLFTCEPIT…CDRLQYCDET (114 aa)). Topologically, residues 19–201 (HSLFTCEPIT…SDELEFAKSF (183 aa)) are extracellular. Cystine bridges form between C24–C85, C32–C78, C69–C106, C95–C129, and C99–C123. N-linked (GlcNAc...) asparagine glycosylation is present at N38. Residues 202-222 (IGTVSIFCLCATLFTFLTFLI) traverse the membrane as a helical segment. Over 223–233 (DVRRFRYPERP) the chain is Cytoplasmic. A helical membrane pass occupies residues 234–254 (IIYYSVCYSIVSLMYFIGFLL). Residues 255–284 (GDSTACNKADEKLELGDTVVLGSQNKACTV) lie on the Extracellular side of the membrane. A helical membrane pass occupies residues 285–305 (LFMLLYFFTMAGTVWWVILTI). Over 306–324 (TWFLAAGRKWSCEAIEQKA) the chain is Cytoplasmic. A helical membrane pass occupies residues 325–345 (VWFHAVAWGTPGFLTVMLLAM). Residues 346 to 370 (NKVEGDNISGVCFVGLYDLDASRYF) lie on the Extracellular side of the membrane. N352 is a glycosylation site (N-linked (GlcNAc...) asparagine). Residues 371-391 (VLLPLCLCVFVGLSLLLAGII) traverse the membrane as a helical segment. Residues 392 to 416 (SLNHVRQVIQHDGRNQEKLKKFMIR) lie on the Cytoplasmic side of the membrane. The chain crosses the membrane as a helical span at residues 417 to 437 (IGVFSGLYLVPLVTLLGCYVY). Over 438-473 (EQVNRITWEITWVSDHCRQYHIPCPYQAKAKARPEL) the chain is Extracellular. The chain crosses the membrane as a helical span at residues 474–494 (ALFMIKYLMTLIVGISAVFWV). The Cytoplasmic portion of the chain corresponds to 495–706 (GSKKTCTEWA…EQGGGCHSDT (212 aa)). The Lys-Thr-X-X-X-Trp motif, mediates interaction with the PDZ domain of Dvl family members signature appears at 498 to 503 (KTCTEW). Residues 588–706 (EIQTSPETSM…EQGGGCHSDT (119 aa)) form a disordered region. Basic and acidic residues predominate over residues 646 to 658 (ARSEGRISPKSDI). Phosphoserine is present on S653. Residues 662-672 (GLAQSNNLQVP) show a composition bias toward polar residues. Residues 673-685 (SSSEPSSLKGSTS) show a composition bias toward low complexity. Residues 694-706 (VRKEQGGGCHSDT) are compositionally biased toward basic and acidic residues.

The protein belongs to the G-protein coupled receptor Fz/Smo family. In terms of assembly, interacts with LMBR1L. In terms of processing, ubiquitinated by ZNRF3, leading to its degradation by the proteasome. Detected in adult heart, brain, placenta, lung, liver, skeletal muscle, kidney, pancreas, thymus, prostate, testis, ovary, small intestine and colon. In the fetus, expressed in brain, lung, liver and kidney.

The protein localises to the membrane. It localises to the cell membrane. It is found in the cell surface. Its subcellular location is the apical cell membrane. The protein resides in the cytoplasmic vesicle membrane. The protein localises to the endoplasmic reticulum membrane. In terms of biological role, receptor for Wnt proteins. Most of frizzled receptors are coupled to the beta-catenin canonical signaling pathway, which leads to the activation of disheveled proteins, inhibition of GSK-3 kinase, nuclear accumulation of beta-catenin and activation of Wnt target genes. A second signaling pathway involving PKC and calcium fluxes has been seen for some family members, but it is not yet clear if it represents a distinct pathway or if it can be integrated in the canonical pathway, as PKC seems to be required for Wnt-mediated inactivation of GSK-3 kinase. Both pathways seem to involve interactions with G-proteins. May be involved in transduction and intercellular transmission of polarity information during tissue morphogenesis and/or in differentiated tissues. Together with FZD3, is involved in the neural tube closure and plays a role in the regulation of the establishment of planar cell polarity (PCP), particularly in the orientation of asymmetric bundles of stereocilia on the apical faces of a subset of auditory and vestibular sensory cells located in the inner ear. The polypeptide is Frizzled-6 (FZD6) (Homo sapiens (Human)).